The primary structure comprises 1039 residues: MNNGKVRIYELSKELNLDNKELLAICDQLNIAVKSHSSTISESEAESIRAAAEKLAATNGTSKKELNATSHKPNSAPAGSRNRPAPPQKQQQILEIRKPKILRNTTSNAPEASVANNQIASSEANSPAPPRPFATPVSPMKPTAPSRPVPRNLSETPQKPAAPEAEPEAQSQAPAKIAVEKPEKSAQPRPGKPERQPKPQLVAPPSRPTAEKLDLSEITGAPGEKPILKRDRPRREDERDQAKPRVAKPAQGETSSAPVQKQARPAQGLVKPEQRVNRPGAPSGDGIRPQRPVRPSADAAPVATPPRGVPGGGRGEAGDTAAIAPDLLDLKRPTPPRLAKGGKKWQEEEIIDEIKEKAGKAGVKGKRVKPLVEDDFEDEDLLDEEGLEIPATVQVSLSIARPPKPKAARSASAATAAPISSPTTRGKRSSHNNRDQNRRQETEVKRERPEKVAVTGAMTVQELADLMAVADTEIVKILFMKGMAVSITQNLDIPTITLVGKELEIEVETAEPEAEARKVTEMIEVGDLEHLLRRPPVVTIMGHVDHGKTTLLDSIRKTKVAAGEAGGITQHIGAYHVDIVHDGKEQQIVFLDTPGHEAFTAMRARGARVTDIAVLVVAADDGVRPQTVEAISHAQAAGVPIVVAINKIDKEGAQPDRVKQELTQYGLTSEEWGGETIMVPVSAIRGENLDTLLEMILLVAEVGELSANPDRNARGTVIEAHLDKAKGAVATLLIQNGTLHVGDILLAGSAFGKVRAMVDDRGRRVDIAGPSFAVEVLGLSDVPAAGDEFEVFDNEKEARALASDRADKQRLSRLLQGRVTLTTLSAQAQEGELKELNLILKGDVQGSVEAIVGSLKQIPQNEVQIRMLLTAAGEITETDIDLAAASGAVIIGFNTTFASGARQAADEAGVDVREYNIIYKLIEDIQGALEGLLEPELVEEPLGQTEVRAVFPVGRGAVAGCYVQSGKLVRNCKVRVRRAGKVIYEGVLDSLKRMKDDAREVNAGYECGIGVDKFHDWAEGDIIESYQMVTKRRTLALTR.

Disordered stretches follow at residues 39-347 (TISE…KWQE) and 400-452 (ARPP…PEKV). The span at 103–125 (RNTTSNAPEASVANNQIASSEAN) shows a compositional bias: polar residues. Low complexity predominate over residues 157–176 (PQKPAAPEAEPEAQSQAPAK). Composition is skewed to basic and acidic residues over residues 178-197 (AVEKPEKSAQPRPGKPERQP) and 226-243 (PILKRDRPRREDERDQAK). Residues 408–423 (ARSASAATAAPISSPT) are compositionally biased toward low complexity. The span at 432-451 (NNRDQNRRQETEVKRERPEK) shows a compositional bias: basic and acidic residues. The tr-type G domain occupies 533–706 (RRPPVVTIMG…LLVAEVGELS (174 aa)). A G1 region spans residues 542–549 (GHVDHGKT). 542–549 (GHVDHGKT) lines the GTP pocket. The G2 stretch occupies residues 567–571 (GITQH). The interval 592-595 (DTPG) is G3. GTP is bound by residues 592–596 (DTPGH) and 646–649 (NKID). Positions 646–649 (NKID) are G4. Positions 682–684 (SAI) are G5.

It belongs to the TRAFAC class translation factor GTPase superfamily. Classic translation factor GTPase family. IF-2 subfamily.

It localises to the cytoplasm. Functionally, one of the essential components for the initiation of protein synthesis. Protects formylmethionyl-tRNA from spontaneous hydrolysis and promotes its binding to the 30S ribosomal subunits. Also involved in the hydrolysis of GTP during the formation of the 70S ribosomal complex. The sequence is that of Translation initiation factor IF-2 from Nostoc sp. (strain PCC 7120 / SAG 25.82 / UTEX 2576).